The primary structure comprises 190 residues: Endo-1,4-beta-xylanase (190 aa).

Residues 1–190 (QTIGPGTGYS…SSGSASITVS (190 aa)) enclose the GH11 domain. Residue Glu-86 is the Nucleophile of the active site. The Proton donor role is filled by Glu-177.

It belongs to the glycosyl hydrolase 11 (cellulase G) family.

It carries out the reaction Endohydrolysis of (1-&gt;4)-beta-D-xylosidic linkages in xylans.. It participates in glycan degradation; xylan degradation. The polypeptide is Endo-1,4-beta-xylanase (Trichoderma harzianum (Hypocrea lixii)).